The primary structure comprises 497 residues: Aldehyde dehydrogenase (497 aa).

241–246 (GSTLVG) contributes to the NAD(+) binding site. The Proton acceptor role is filled by Glu264. The active-site Nucleophile is Cys298.

Belongs to the aldehyde dehydrogenase family.

The catalysed reaction is an aldehyde + NAD(+) + H2O = a carboxylate + NADH + 2 H(+). It functions in the pathway alcohol metabolism; ethanol degradation; acetate from ethanol: step 2/2. The sequence is that of Aldehyde dehydrogenase (aldA) from Emericella nidulans (strain FGSC A4 / ATCC 38163 / CBS 112.46 / NRRL 194 / M139) (Aspergillus nidulans).